The sequence spans 258 residues: Phosphate import ATP-binding protein PstB (258 aa).

Residues 5–247 (IDVSGLTAYY…SQIFSNPKEK (243 aa)) form the ABC transporter domain. 37 to 44 (GPSGCGKS) provides a ligand contact to ATP.

Belongs to the ABC transporter superfamily. Phosphate importer (TC 3.A.1.7) family. In terms of assembly, the complex is composed of two ATP-binding proteins (PstB), two transmembrane proteins (PstC and PstA) and a solute-binding protein (PstS).

It localises to the cell membrane. The catalysed reaction is phosphate(out) + ATP + H2O = ADP + 2 phosphate(in) + H(+). In terms of biological role, part of the ABC transporter complex PstSACB involved in phosphate import. Responsible for energy coupling to the transport system. The protein is Phosphate import ATP-binding protein PstB of Frankia casuarinae (strain DSM 45818 / CECT 9043 / HFP020203 / CcI3).